A 159-amino-acid polypeptide reads, in one-letter code: MGSEEEKVVVPRNFRLLEELERGEKGIGDGTVSYGMDDADDILMQSWTGTILGPHNTAYEGKIFQLKLFCGKDYPESPPTVRFQSRINMACVNPENGVVDPSHFPMLSNWRREFTMEDLLIQLKKEMMSSQNRKLAQPLEGNEEGRTDPKGLVVKCCVM.

Residues 11-159 form the UBC core domain; the sequence is PRNFRLLEEL…KGLVVKCCVM (149 aa).

This sequence belongs to the ubiquitin-conjugating enzyme family. Heterodimer with UBC35 or UBC36. Expressed in roots, shoots, leaves, stems and flowers, but not in pollen.

Its function is as follows. Has no ubiquitin ligase activity on its own. The heterodimer with UBC catalyzes the synthesis of non-canonical poly-ubiquitin chains that are linked through 'Lys-63'. This type of poly-ubiquitination does not lead to protein degradation by the proteasome. Mediates transcriptional activation of target genes. May play a role in the control of progress through the cell cycle and differentiation. May play a role in the error-free DNA repair pathway and contributes to the survival of cells after DNA damage. This is Ubiquitin-conjugating enzyme E2 variant 1B (UEV1B) from Arabidopsis thaliana (Mouse-ear cress).